Reading from the N-terminus, the 372-residue chain is MATSPQKSPLVPKSPTPKSPPSRKKDDSFLGKLGGTLARRKKAKEVSEFQEEGMNAINLPLSPISFELDPEDTLLEENEVRTMVDPNSRNDPKLQELMKVLIDWINDVLVGERIIVKDLAEDLYDGQVLQKLFEKLESEKLNVAEVTQSEIAQKQKLQTVLEKINETLKLPPRSIKWNVDSVHAKNLVAILHLLVALSQYFRAPIRLPDHVSIQVVVVQKREGILQSRQIQEEITGNTEALSGRHERDAFDTLFDHAPDKLNVVKKTLITFVNKHLNKLNLEVTELETQFADGVYLVLLMGLLEGYFVPLHSFFLTPDSFEQKVLNVSFAFELMQDGGLEKPKPRPEDIVNCDLKSTLRVLYNLFTKYRNVE.

Residues Met-1 to Gly-31 are disordered. At Ala-2 the chain carries N-acetylalanine. Phosphoserine occurs at positions 8, 14, and 19. The interval Pro-21–Lys-25 is interaction with ARHGAP31. 2 positions are modified to phosphoserine: Ser-28 and Ser-62. Calponin-homology (CH) domains follow at residues Gln-95 to Arg-202 and Asn-262 to Arg-369. Residues Gly-223–Glu-372 are required for interaction with TESK1 and ILK.

This sequence belongs to the parvin family. Component of the heterotrimeric IPP (ILK-PINCH-PARVIN) complex composed of ILK, LIMS1/PINCH and PARVA; the complex binds to F-actin via the C-terminal tail of LIMS1 and the N-terminal region of PARVA, promoting F-actin filament bundling. Interacts with TGFB1I1. Interacts with ARHGAP31. Interacts with the actin cytoskeleton. Interacts (via C-terminus) with TESK1 (via C-terminus); the interaction inhibits TESK1 kinase activity. Interacts with PXN/PAXILLIN (via LD motif 4).

Its subcellular location is the cell junction. The protein localises to the focal adhesion. It localises to the cell membrane. The protein resides in the cytoplasm. It is found in the cytoskeleton. Its subcellular location is the myofibril. The protein localises to the sarcomere. It localises to the z line. In terms of biological role, plays a role in sarcomere organization and in smooth muscle cell contraction. Required for normal development of the embryonic cardiovascular system, and for normal septation of the heart outflow tract. Plays a role in sprouting angiogenesis and is required for normal adhesion of vascular smooth muscle cells to endothelial cells during blood vessel development. Plays a role in the reorganization of the actin cytoskeleton, formation of lamellipodia and ciliogenesis. Plays a role in the establishment of cell polarity, cell adhesion, cell spreading, and directed cell migration. Within the IPP (ILK-PINCH-PARVIN) complex, binds to F-actin, promoting F-actin bundling, a process required to generate force for actin cytoskeleton reorganization and subsequent dynamic cell adhesion events such as cell spreading and migration. This Mus musculus (Mouse) protein is Alpha-parvin (Parva).